Here is a 261-residue protein sequence, read N- to C-terminus: Uridine-cytidine kinase 2-B (261 aa).

29 to 37 (GGTASGKSS) contributes to the ATP binding site. Substrate is bound by residues aspartate 86, tyrosine 114, histidine 119, arginine 168, arginine 178, and glutamine 186. Aspartate 215 is a binding site for ATP. A disordered region spans residues 238 to 261 (RQNGFQNGHGTPRQRRTSESSRPH).

Belongs to the uridine kinase family. In terms of assembly, homotetramer.

The enzyme catalyses uridine + ATP = UMP + ADP + H(+). The catalysed reaction is cytidine + ATP = CMP + ADP + H(+). It functions in the pathway pyrimidine metabolism; CTP biosynthesis via salvage pathway; CTP from cytidine: step 1/3. Its pathway is pyrimidine metabolism; UMP biosynthesis via salvage pathway; UMP from uridine: step 1/1. In terms of biological role, phosphorylates uridine and cytidine to uridine monophosphate and cytidine monophosphate. Does not phosphorylate deoxyribonucleosides or purine ribonucleosides. Can use ATP or GTP as a phosphate donor. In Danio rerio (Zebrafish), this protein is Uridine-cytidine kinase 2-B (uck2b).